The chain runs to 279 residues: Troponin T, fast skeletal muscle (279 aa).

Acidic residues predominate over residues 1–21 (MSDEEVEHVEEQYEEEEEAQE). The segment at 1–82 (MSDEEVEHVE…EKVDFDDIQK (82 aa)) is disordered. S2 carries the N-acetylserine modification. At S2 the chain carries Phosphoserine. Composition is skewed to basic and acidic residues over residues 28-49 (EVHEPAPEVHVPEEVHEDALED) and 70-82 (PEGEKVDFDDIQK). S98 carries the post-translational modification Phosphoserine. Basic and acidic residues predominate over residues 121 to 163 (RAERAEQQRIRAEKERERQNRLAEEKARREEEDAKRRAEEDLK). The tract at residues 121–200 (RAERAEQQRI…TAREMKKKIL (80 aa)) is disordered. Phosphoserine is present on residues S169, S176, and S177. A compositionally biased stretch (basic and acidic residues) spans 191 to 200 (TAREMKKKIL). At S213 the chain carries Phosphoserine. A Phosphotyrosine modification is found at Y229.

This sequence belongs to the troponin T family.

Its function is as follows. Troponin T is the tropomyosin-binding subunit of troponin, the thin filament regulatory complex which confers calcium-sensitivity to striated muscle actomyosin ATPase activity. In Oryctolagus cuniculus (Rabbit), this protein is Troponin T, fast skeletal muscle (TNNT3).